A 425-amino-acid chain; its full sequence is Multifunctional CCA protein (425 aa).

ATP contacts are provided by G8 and R11. The CTP site is built by G8 and R11. Residues E21 and D23 each coordinate Mg(2+). Residues R91, R137, and R140 each coordinate ATP. CTP contacts are provided by R91, R137, and R140. The 102-residue stretch at T228–L329 folds into the HD domain.

This sequence belongs to the tRNA nucleotidyltransferase/poly(A) polymerase family. Bacterial CCA-adding enzyme type 1 subfamily. Monomer. Can also form homodimers and oligomers. Requires Mg(2+) as cofactor. It depends on Ni(2+) as a cofactor.

The enzyme catalyses a tRNA precursor + 2 CTP + ATP = a tRNA with a 3' CCA end + 3 diphosphate. It catalyses the reaction a tRNA with a 3' CCA end + 2 CTP + ATP = a tRNA with a 3' CCACCA end + 3 diphosphate. Catalyzes the addition and repair of the essential 3'-terminal CCA sequence in tRNAs without using a nucleic acid template. Adds these three nucleotides in the order of C, C, and A to the tRNA nucleotide-73, using CTP and ATP as substrates and producing inorganic pyrophosphate. tRNA 3'-terminal CCA addition is required both for tRNA processing and repair. Also involved in tRNA surveillance by mediating tandem CCA addition to generate a CCACCA at the 3' terminus of unstable tRNAs. While stable tRNAs receive only 3'-terminal CCA, unstable tRNAs are marked with CCACCA and rapidly degraded. The protein is Multifunctional CCA protein of Methylococcus capsulatus (strain ATCC 33009 / NCIMB 11132 / Bath).